The primary structure comprises 534 residues: MRSIIALMRQREYFVQAIRRTTCVASPALNQTNFQASSFLTTLISSKKSPEETCIGSEEEEEEPNKCLSLRIEKLPKGVTVGSALQSWMGDGFPVHGGDVYHAINRLRKLGRNKRALELMEWIIRERPYRLGELEYSYLLEFTVKLHGVSQGEKLFTRVPQEFQNELLYNNLVIACLDQGVIRLALEYMKKMRELGYRTSHLVYNRLIIRNSAPGRRKLIAKDLALMKADKATPHVSTYHILMKLEANEHNIDGVLKAFDGMKKAGVEPNEVSYCILAMAHAVARLYTVAEAYTEEIEKSITGDNWSTLDILMILYGRLGKEKELARTWNVIRGFHHVRSKSYLLATEAFARVGNLDRAEELWLEMKNVKGLKETEQFNSLLSVYCKDGLIEKAIGVFREMTGNGFKPNSITYRHLALGCAKAKLMKEALKNIEMGLNLKTSKSIGSSTPWLETTLSIIECFAEKGDVENSEKLFEEVKNAKYNRYAFVYNALFKAYVKAKVYDPNLFKRMVLGGARPDAESYSLLKLVEQYKP.

A mitochondrion-targeting transit peptide spans 1–20 (MRSIIALMRQREYFVQAIRR). PPR repeat units follow at residues 165-199 (NELL…GYRT), 200-234 (SHLV…KATP), 235-269 (HVST…GVEP), 270-300 (NEVS…IEKS), 305-335 (NWST…IRGF), 339-369 (RSKS…MKNV), 374-408 (ETEQ…GFKP), 409-443 (NSIT…KTSK), and 451-485 (WLET…KYNR).

The protein belongs to the PPR family. P subfamily.

The protein resides in the mitochondrion. The sequence is that of Pentatricopeptide repeat-containing protein At1g07590, mitochondrial from Arabidopsis thaliana (Mouse-ear cress).